The primary structure comprises 206 residues: Large ribosomal subunit protein uL4 (206 aa).

Residues 43–78 (ARSGNRKQKDREEVHHTTKKPWRQKGTGRARAGMSS) are disordered. Residues 49-58 (KQKDREEVHH) are compositionally biased toward basic and acidic residues. Basic residues predominate over residues 59-70 (TTKKPWRQKGTG).

It belongs to the universal ribosomal protein uL4 family. In terms of assembly, part of the 50S ribosomal subunit.

Functionally, one of the primary rRNA binding proteins, this protein initially binds near the 5'-end of the 23S rRNA. It is important during the early stages of 50S assembly. It makes multiple contacts with different domains of the 23S rRNA in the assembled 50S subunit and ribosome. Its function is as follows. Forms part of the polypeptide exit tunnel. The sequence is that of Large ribosomal subunit protein uL4 from Herminiimonas arsenicoxydans.